A 146-amino-acid polypeptide reads, in one-letter code: Nitric oxide reductase subunit C (146 aa).

A helical; Signal-anchor membrane pass occupies residues 13–29 (IYFGGSVFFFLVFLGLT). Cysteine 61, cysteine 64, and histidine 65 together coordinate heme c.

Heterodimer of cytochromes b (large subunit) and c (small subunit).

The protein localises to the cell membrane. Functionally, component of the anaerobic respiratory chain that transforms nitrate to dinitrogen (denitrification). The sequence is that of Nitric oxide reductase subunit C (norC) from Stutzerimonas stutzeri (Pseudomonas stutzeri).